Here is a 623-residue protein sequence, read N- to C-terminus: Sulfite reductase [NADPH] flavoprotein alpha-component (623 aa).

Positions 1–32 (MSFQKNEYSHKNVSEDNNGQGGNPPIASPLND) are disordered. The Flavodoxin-like domain occupies 87–225 (LTIIFASQTG…AAEEWRKNAL (139 aa)). FMN contacts are provided by residues 93-98 (SQTGNA), 140-143 (STNG), and 176-185 (LGDSSYEFFC). An FAD-binding FR-type domain is found at 258–472 (QNPYTATLLT…VEHNNNFKLP (215 aa)). Residues threonine 346, alanine 380, 410–413 (RLYS), 428–430 (TVG), tyrosine 434, and 443–446 (GGAS) each bind FAD. Residues 543–544 (SR), 549–553 (KVYVQ), and aspartate 585 contribute to the NADP(+) site. Position 623 (tyrosine 623) interacts with FAD.

Belongs to the NADPH-dependent sulphite reductase flavoprotein subunit CysJ family. This sequence in the N-terminal section; belongs to the flavodoxin family. It in the C-terminal section; belongs to the flavoprotein pyridine nucleotide cytochrome reductase family. As to quaternary structure, alpha(8)-beta(8). The alpha component is a flavoprotein, the beta component is a hemoprotein. The cofactor is FAD. Requires FMN as cofactor.

The enzyme catalyses hydrogen sulfide + 3 NADP(+) + 3 H2O = sulfite + 3 NADPH + 4 H(+). It functions in the pathway sulfur metabolism; hydrogen sulfide biosynthesis; hydrogen sulfide from sulfite (NADPH route): step 1/1. Its function is as follows. Component of the sulfite reductase complex that catalyzes the 6-electron reduction of sulfite to sulfide. This is one of several activities required for the biosynthesis of L-cysteine from sulfate. The flavoprotein component catalyzes the electron flow from NADPH -&gt; FAD -&gt; FMN to the hemoprotein component. This Vibrio parahaemolyticus serotype O3:K6 (strain RIMD 2210633) protein is Sulfite reductase [NADPH] flavoprotein alpha-component.